The sequence spans 88 residues: Small ribosomal subunit protein uS17 (88 aa).

This sequence belongs to the universal ribosomal protein uS17 family. Part of the 30S ribosomal subunit.

One of the primary rRNA binding proteins, it binds specifically to the 5'-end of 16S ribosomal RNA. The polypeptide is Small ribosomal subunit protein uS17 (Dechloromonas aromatica (strain RCB)).